The following is a 363-amino-acid chain: MKYKLVLAVAVLVFSLPSQAERIKDIANVQGVRSNQLIGYGLVVGLPGTGEKTSYTEQTFMTMLKNFGINLPDNVKPKIKNVAVVAVHADMPAFIKPGQDLDVTVSSLGEAKSLRGGTLLQTFLKGVDGNVYAIAQGSLVVSGFSADGLDGSKVIQNTPTVGRIPNGAIVERSVATPFSTGDYLTFNLRRSDFSTAQRMADAINELLGPDMARPLDATSVQVSAPRDVSQRVSFLATLENLDVIPAEESAKVIVNSRTGTIVVGQNVRLLPAAITHGGMTVTIAEATQVSQPNALANGQTTVTSNSTITATESDRRMFMFNPGTTLDELVRAVNLVGAAPSDVLAILEALKVAGALHGELIII.

The signal sequence occupies residues 1–20; that stretch reads MKYKLVLAVAVLVFSLPSQA.

Belongs to the FlgI family. The basal body constitutes a major portion of the flagellar organelle and consists of four rings (L,P,S, and M) mounted on a central rod.

The protein resides in the periplasm. Its subcellular location is the bacterial flagellum basal body. Functionally, assembles around the rod to form the L-ring and probably protects the motor/basal body from shearing forces during rotation. This is Flagellar P-ring protein from Shewanella baltica (strain OS223).